We begin with the raw amino-acid sequence, 167 residues long: UPF0587 protein F46B6.12 (167 aa).

Residues Cys-34, Cys-37, Cys-68, and Cys-71 each contribute to the Zn(2+) site.

The protein belongs to the UPF0587 family.

This chain is UPF0587 protein F46B6.12, found in Caenorhabditis elegans.